A 334-amino-acid polypeptide reads, in one-letter code: Glyceraldehyde-3-phosphate dehydrogenase (334 aa).

NAD(+) is bound by residues 12 to 13 (TI) and G111. Residue 140–142 (SCN) coordinates D-glyceraldehyde 3-phosphate. The Nucleophile role is filled by C141. R167 serves as a coordination point for NAD(+). A D-glyceraldehyde 3-phosphate-binding site is contributed by 192–193 (HG). An NAD(+)-binding site is contributed by Q298.

This sequence belongs to the glyceraldehyde-3-phosphate dehydrogenase family. Homotetramer.

The protein resides in the cytoplasm. The catalysed reaction is D-glyceraldehyde 3-phosphate + phosphate + NADP(+) = (2R)-3-phospho-glyceroyl phosphate + NADPH + H(+). It carries out the reaction D-glyceraldehyde 3-phosphate + phosphate + NAD(+) = (2R)-3-phospho-glyceroyl phosphate + NADH + H(+). It participates in carbohydrate degradation; glycolysis; pyruvate from D-glyceraldehyde 3-phosphate: step 1/5. In Thermococcus kodakarensis (strain ATCC BAA-918 / JCM 12380 / KOD1) (Pyrococcus kodakaraensis (strain KOD1)), this protein is Glyceraldehyde-3-phosphate dehydrogenase.